We begin with the raw amino-acid sequence, 321 residues long: Protein-L-histidine N-pros-methyltransferase (321 aa).

A signal peptide spans 1–24; the sequence is MRLWLCWLGCYTLLLWALRRRMWA. The N-linked (GlcNAc...) asparagine glycan is linked to N89. Residues E177, N213, and Y298 each coordinate S-adenosyl-L-homocysteine.

This sequence belongs to the METTL9 family.

It localises to the endoplasmic reticulum. The protein resides in the mitochondrion. It catalyses the reaction L-histidyl-[protein] + S-adenosyl-L-methionine = N(pros)-methyl-L-histidyl-[protein] + S-adenosyl-L-homocysteine + H(+). Protein-histidine N-methyltransferase that specifically catalyzes 1-methylhistidine (pros-methylhistidine) methylation of target proteins. Mediates methylation of proteins with a His-x-His (HxH) motif (where 'x' is preferably a small amino acid); 1-methylhistidine modification may affect the binding of zinc and other metals to its target proteins. The sequence is that of Protein-L-histidine N-pros-methyltransferase from Gallus gallus (Chicken).